Here is a 1088-residue protein sequence, read N- to C-terminus: Tyrocidine synthase 1 (1088 aa).

The region spanning 528–602 is the Carrier domain; that stretch reads PPRTETESIL…QVALFVKSTT (75 aa). Residue S563 is modified to O-(pantetheine 4'-phosphoryl)serine.

The protein belongs to the ATP-dependent AMP-binding enzyme family. Large multienzyme complex of TycA, TycB and TycC. It depends on pantetheine 4'-phosphate as a cofactor.

The enzyme catalyses L-phenylalanine + ATP + H2O = D-phenylalanine + AMP + diphosphate + H(+). It functions in the pathway antibiotic biosynthesis; tyrocidine biosynthesis. Its function is as follows. In the first step of peptide synthesis this enzyme activates phenylalanine and racemizes it to the D-isomer. The chain is Tyrocidine synthase 1 (tycA) from Brevibacillus parabrevis.